Reading from the N-terminus, the 491-residue chain is UDP-N-acetylmuramoyl-L-alanyl-D-glutamate--2,6-diaminopimelate ligase (491 aa).

A UDP-N-acetyl-alpha-D-muramoyl-L-alanyl-D-glutamate-binding site is contributed by Ser30. 108-114 (GTNGKTT) serves as a coordination point for ATP. UDP-N-acetyl-alpha-D-muramoyl-L-alanyl-D-glutamate is bound by residues Asn149, 150 to 151 (TT), Ser177, Gln183, and Arg185. Lys217 is subject to N6-carboxylysine. Meso-2,6-diaminopimelate contacts are provided by residues Arg383, 407 to 410 (DNPR), Gly458, and Glu462. The Meso-diaminopimelate recognition motif signature appears at 407 to 410 (DNPR).

Belongs to the MurCDEF family. MurE subfamily. Mg(2+) serves as cofactor. In terms of processing, carboxylation is probably crucial for Mg(2+) binding and, consequently, for the gamma-phosphate positioning of ATP.

The protein resides in the cytoplasm. The enzyme catalyses UDP-N-acetyl-alpha-D-muramoyl-L-alanyl-D-glutamate + meso-2,6-diaminopimelate + ATP = UDP-N-acetyl-alpha-D-muramoyl-L-alanyl-gamma-D-glutamyl-meso-2,6-diaminopimelate + ADP + phosphate + H(+). It functions in the pathway cell wall biogenesis; peptidoglycan biosynthesis. Its function is as follows. Catalyzes the addition of meso-diaminopimelic acid to the nucleotide precursor UDP-N-acetylmuramoyl-L-alanyl-D-glutamate (UMAG) in the biosynthesis of bacterial cell-wall peptidoglycan. The protein is UDP-N-acetylmuramoyl-L-alanyl-D-glutamate--2,6-diaminopimelate ligase of Listeria monocytogenes serotype 4b (strain F2365).